Consider the following 447-residue polypeptide: UDP-N-acetylmuramate--L-alanine ligase (447 aa).

Residue 115 to 121 (GAHGKTS) coordinates ATP.

Belongs to the MurCDEF family.

Its subcellular location is the cytoplasm. The enzyme catalyses UDP-N-acetyl-alpha-D-muramate + L-alanine + ATP = UDP-N-acetyl-alpha-D-muramoyl-L-alanine + ADP + phosphate + H(+). It functions in the pathway cell wall biogenesis; peptidoglycan biosynthesis. Functionally, cell wall formation. This Streptococcus thermophilus (strain CNRZ 1066) protein is UDP-N-acetylmuramate--L-alanine ligase.